An 87-amino-acid polypeptide reads, in one-letter code: Omega-theraphotoxin-Gr1a (87 aa).

Residues 1–24 (MKAQIFVVVLGLAALSVLCYGSEA) form the signal peptide. The propeptide occupies 25–49 (DESALHEEIFQLLAASDEVPKPQER). Disulfide bonds link C51/C65, C58/C70, and C64/C79. V85 carries the valine amide modification.

In terms of tissue distribution, expressed by the venom gland.

It localises to the secreted. Its function is as follows. Inhibits P/Q- (Cav2.1/CACNA1A) and N-type (Cav2.2/CACNA1B) voltage-gated calcium channel by modifying voltage-dependent gating. It selectively and reversibly blocks the calcium channels coupled to glutamate release. Also inhibits potassium channels (Kv2.1/KCNB1) with lower affinity. Has also been shown to weakly inhibit Kv11.1/KCNH2/ERG1, Kv1.2/KCNA2, Kv1.3/KCNA3, Nav1.5/SCN5A, Nav1.7/SCN9A and TRPV1. The sequence is that of Omega-theraphotoxin-Gr1a from Grammostola rosea (Chilean rose tarantula).